The following is a 126-amino-acid chain: Glycine cleavage system H protein (126 aa).

The Lipoyl-binding domain occupies 21-103 (TVTVGISDHA…YESGWIARIK (83 aa)). Lys62 carries the post-translational modification N6-lipoyllysine.

This sequence belongs to the GcvH family. The glycine cleavage system is composed of four proteins: P, T, L and H. Requires (R)-lipoate as cofactor.

Its function is as follows. The glycine cleavage system catalyzes the degradation of glycine. The H protein shuttles the methylamine group of glycine from the P protein to the T protein. The protein is Glycine cleavage system H protein of Aliivibrio fischeri (strain ATCC 700601 / ES114) (Vibrio fischeri).